We begin with the raw amino-acid sequence, 358 residues long: F-box/kelch-repeat protein SKIP4 (358 aa).

The F-box domain occupies 20 to 67; the sequence is ALISGVPDDISKSCLARVPREYHMAMKCVSRRWRDFVCSDEMCDYRNE. Kelch repeat units follow at residues 78–122, 123–171, 173–219, 220–269, 271–307, and 308–355; these read LCRD…VLGK, RLFV…TLDG, IIAI…VMDG, RIYI…VLDQ, FGAKLTMWCKDTRMWIHIGKLSQLVMKQPCRLVSIGN, and SIFV…SCKS.

As to quaternary structure, part of a SCF (SKP1-cullin-F-box) protein ligase complex. Interacts with SKP1A/ASK1.

Its pathway is protein modification; protein ubiquitination. The polypeptide is F-box/kelch-repeat protein SKIP4 (SKIP4) (Arabidopsis thaliana (Mouse-ear cress)).